The primary structure comprises 465 residues: NADH-quinone oxidoreductase subunit N (465 aa).

The next 13 helical transmembrane spans lie at 6–26, 30–50, 66–86, 98–118, 156–176, 194–214, 226–246, 261–281, 289–309, 317–337, 363–383, 391–411, and 432–452; these read ILPE…GIVF, TINL…ILSA, LYIR…LLLL, SILI…NNLI, ALSS…TGLV, IVFG…IAPF, PTIV…TFLI, FQPV…FGAL, LLAY…SIFT, LIYL…FIQI, ILLF…KLFI, GFIG…YYYL, and SLFI…MCVE.

The protein belongs to the complex I subunit 2 family. In terms of assembly, NDH-1 is composed of 14 different subunits. Subunits NuoA, H, J, K, L, M, N constitute the membrane sector of the complex.

It is found in the cell membrane. The enzyme catalyses a quinone + NADH + 5 H(+)(in) = a quinol + NAD(+) + 4 H(+)(out). In terms of biological role, NDH-1 shuttles electrons from NADH, via FMN and iron-sulfur (Fe-S) centers, to quinones in the respiratory chain. The immediate electron acceptor for the enzyme in this species is believed to be ubiquinone. Couples the redox reaction to proton translocation (for every two electrons transferred, four hydrogen ions are translocated across the cytoplasmic membrane), and thus conserves the redox energy in a proton gradient. The polypeptide is NADH-quinone oxidoreductase subunit N (Wolbachia sp. subsp. Brugia malayi (strain TRS)).